Consider the following 305-residue polypeptide: tRNA dimethylallyltransferase (305 aa).

9 to 16 (GPTASGKT) contacts ATP. Residue 11–16 (TASGKT) participates in substrate binding. Interaction with substrate tRNA stretches follow at residues 34–37 (DSAL), 158–162 (QRLSR), and 239–244 (RCVGYR).

The protein belongs to the IPP transferase family. Monomer. Mg(2+) serves as cofactor.

It catalyses the reaction adenosine(37) in tRNA + dimethylallyl diphosphate = N(6)-dimethylallyladenosine(37) in tRNA + diphosphate. Functionally, catalyzes the transfer of a dimethylallyl group onto the adenine at position 37 in tRNAs that read codons beginning with uridine, leading to the formation of N6-(dimethylallyl)adenosine (i(6)A). This Aeromonas hydrophila subsp. hydrophila (strain ATCC 7966 / DSM 30187 / BCRC 13018 / CCUG 14551 / JCM 1027 / KCTC 2358 / NCIMB 9240 / NCTC 8049) protein is tRNA dimethylallyltransferase.